Reading from the N-terminus, the 257-residue chain is Global transcriptional regulator CodY (257 aa).

A GAF domain region spans residues 1–155 (MSLLSKTREL…AATVIGMEIL (155 aa)). The H-T-H motif DNA-binding region spans 203–222 (ASKVADRVGITRSVIVNALR).

Belongs to the CodY family.

Its subcellular location is the cytoplasm. Functionally, DNA-binding global transcriptional regulator which is involved in the adaptive response to starvation and acts by directly or indirectly controlling the expression of numerous genes in response to nutrient availability. During rapid exponential growth, CodY is highly active and represses genes whose products allow adaptation to nutrient depletion. In Staphylococcus saprophyticus subsp. saprophyticus (strain ATCC 15305 / DSM 20229 / NCIMB 8711 / NCTC 7292 / S-41), this protein is Global transcriptional regulator CodY.